The following is a 380-amino-acid chain: Cytochrome b (380 aa).

4 helical membrane-spanning segments follow: residues 33 to 53, 77 to 98, 113 to 133, and 178 to 198; these read FGSL…FLAM, WFIR…YLHI, WTIG…GYVL, and FFTF…VHLL. H83 and H97 together coordinate heme b. H182 and H196 together coordinate heme b. H201 serves as a coordination point for a ubiquinone. 4 consecutive transmembrane segments (helical) span residues 226–246, 288–308, 320–340, and 347–367; these read YKDL…ALFS, LGGV…PILH, LTQT…WIGG, and FVII…VLAP.

Belongs to the cytochrome b family. As to quaternary structure, the cytochrome bc1 complex contains 3 respiratory subunits (MT-CYB, CYC1 and UQCRFS1), 2 core proteins (UQCRC1 and UQCRC2) and probably 6 low-molecular weight proteins. It depends on heme b as a cofactor.

The protein localises to the mitochondrion inner membrane. Its function is as follows. Component of the ubiquinol-cytochrome c reductase complex (complex III or cytochrome b-c1 complex) that is part of the mitochondrial respiratory chain. The b-c1 complex mediates electron transfer from ubiquinol to cytochrome c. Contributes to the generation of a proton gradient across the mitochondrial membrane that is then used for ATP synthesis. The chain is Cytochrome b (mt-cyb) from Lampris guttatus (Opah).